We begin with the raw amino-acid sequence, 60 residues long: Large ribosomal subunit protein bL32 (60 aa).

Positions 1 to 16 (MAVPRRKTSPSRRGMR) are enriched in basic residues. A disordered region spans residues 1–60 (MAVPRRKTSPSRRGMRRSADAIKKPTYVEDKDSGELRRPHHLDLKTGMYKGRQVLKKKDA). The segment covering 17–44 (RSADAIKKPTYVEDKDSGELRRPHHLDL) has biased composition (basic and acidic residues).

This sequence belongs to the bacterial ribosomal protein bL32 family.

In Bradyrhizobium sp. (strain BTAi1 / ATCC BAA-1182), this protein is Large ribosomal subunit protein bL32.